Here is a 185-residue protein sequence, read N- to C-terminus: MALHLTLARPYAKAAFADGQKANQLEAWLAVFTAFSKIIKNKEVARQIINPKFSDKEIKTLLFDLIQTIEPESTKQLKDKIDHFLQLLIDEKRLMILPDIALVYQQLLNKYQDIIEASVTYVFPLNDEHRQQIQKQLEKRFNAEVKLKMIKDESLLGGVIIRAGNWVMDGSIKGKLTRLAENLKG.

It belongs to the ATPase delta chain family. F-type ATPases have 2 components, F(1) - the catalytic core - and F(0) - the membrane proton channel. F(1) has five subunits: alpha(3), beta(3), gamma(1), delta(1), epsilon(1). F(0) has three main subunits: a(1), b(2) and c(10-14). The alpha and beta chains form an alternating ring which encloses part of the gamma chain. F(1) is attached to F(0) by a central stalk formed by the gamma and epsilon chains, while a peripheral stalk is formed by the delta and b chains.

It localises to the cell inner membrane. In terms of biological role, f(1)F(0) ATP synthase produces ATP from ADP in the presence of a proton or sodium gradient. F-type ATPases consist of two structural domains, F(1) containing the extramembraneous catalytic core and F(0) containing the membrane proton channel, linked together by a central stalk and a peripheral stalk. During catalysis, ATP synthesis in the catalytic domain of F(1) is coupled via a rotary mechanism of the central stalk subunits to proton translocation. Functionally, this protein is part of the stalk that links CF(0) to CF(1). It either transmits conformational changes from CF(0) to CF(1) or is implicated in proton conduction. This is ATP synthase subunit delta from Coxiella burnetii (strain CbuK_Q154) (Coxiella burnetii (strain Q154)).